The sequence spans 527 residues: Baicalin-beta-D-glucuronidase (527 aa).

An N-terminal signal peptide occupies residues 1 to 25; sequence MGFQVWQKGLCVLCFSLIFICGVIG. The active-site Proton donor is Glu212. The active-site Nucleophile is Glu329.

The protein belongs to the glycosyl hydrolase 79 family. As to quaternary structure, homotetramer.

The catalysed reaction is baicalin + H2O = baicalein + D-glucuronate + H(+). Its function is as follows. Beta-glucuronidase involved in the initiation of H(2)O(2) metabolism via the production of baicalein. Unable to use glycyrrhizin, gypsogenin-3-O-D-glucuronide, luteolin-7-O-D-glucoside and apigenin-7-O-D-glucoside as substrates. The protein is Baicalin-beta-D-glucuronidase (SGUS) of Scutellaria baicalensis (Baical skullcap).